The sequence spans 229 residues: Large ribosomal subunit protein uL1 (229 aa).

The protein belongs to the universal ribosomal protein uL1 family. As to quaternary structure, part of the 50S ribosomal subunit.

Binds directly to 23S rRNA. The L1 stalk is quite mobile in the ribosome, and is involved in E site tRNA release. Functionally, protein L1 is also a translational repressor protein, it controls the translation of the L11 operon by binding to its mRNA. The protein is Large ribosomal subunit protein uL1 of Leifsonia xyli subsp. xyli (strain CTCB07).